A 289-amino-acid chain; its full sequence is Thiazole synthase (289 aa).

The Schiff-base intermediate with DXP role is filled by Lys132. 1-deoxy-D-xylulose 5-phosphate is bound by residues Gly193, 219 to 220 (AG), and 241 to 242 (NT).

This sequence belongs to the ThiG family. Homotetramer. Forms heterodimers with either ThiH or ThiS.

The protein localises to the cytoplasm. The catalysed reaction is [ThiS sulfur-carrier protein]-C-terminal-Gly-aminoethanethioate + 2-iminoacetate + 1-deoxy-D-xylulose 5-phosphate = [ThiS sulfur-carrier protein]-C-terminal Gly-Gly + 2-[(2R,5Z)-2-carboxy-4-methylthiazol-5(2H)-ylidene]ethyl phosphate + 2 H2O + H(+). It participates in cofactor biosynthesis; thiamine diphosphate biosynthesis. Catalyzes the rearrangement of 1-deoxy-D-xylulose 5-phosphate (DXP) to produce the thiazole phosphate moiety of thiamine. Sulfur is provided by the thiocarboxylate moiety of the carrier protein ThiS. In vitro, sulfur can be provided by H(2)S. The chain is Thiazole synthase from Rhodospirillum rubrum (strain ATCC 11170 / ATH 1.1.1 / DSM 467 / LMG 4362 / NCIMB 8255 / S1).